Here is a 241-residue protein sequence, read N- to C-terminus: Octanoyltransferase (241 aa).

The BPL/LPL catalytic domain occupies 49 to 233 (GEASELVWLL…AFGEVFGPSE (185 aa)). Substrate-binding positions include 87–94 (RGGQVTYH), 162–164 (AIG), and 175–177 (GIS). Residue Cys-193 is the Acyl-thioester intermediate of the active site.

This sequence belongs to the LipB family.

The protein resides in the cytoplasm. The enzyme catalyses octanoyl-[ACP] + L-lysyl-[protein] = N(6)-octanoyl-L-lysyl-[protein] + holo-[ACP] + H(+). It participates in protein modification; protein lipoylation via endogenous pathway; protein N(6)-(lipoyl)lysine from octanoyl-[acyl-carrier-protein]: step 1/2. Catalyzes the transfer of endogenously produced octanoic acid from octanoyl-acyl-carrier-protein onto the lipoyl domains of lipoate-dependent enzymes. Lipoyl-ACP can also act as a substrate although octanoyl-ACP is likely to be the physiological substrate. This Nitrobacter hamburgensis (strain DSM 10229 / NCIMB 13809 / X14) protein is Octanoyltransferase.